A 492-amino-acid polypeptide reads, in one-letter code: GlcNAc-binding protein A (492 aa).

The N-terminal stretch at 1-23 (MNKSSTKTLIALSMMAVSSGVSA) is a signal peptide. The Chitin-binding type-4 domain maps to 24–204 (HGYVSETNDG…AFYNVIDVKF (181 aa)). Positions 443-484 (AGTKVLAEDSNVYQCKEFPYSGYCVQWTETATNFAPGVGSDW) constitute a Chitin-binding type-3 domain.

This sequence belongs to the GbpA family.

Its subcellular location is the secreted. In terms of biological role, probably interacts with GlcNAc residues. May promote attachment to both epithelial cell surfaces and chitin. The protein is GlcNAc-binding protein A of Aliivibrio fischeri (strain MJ11) (Vibrio fischeri).